Here is a 1199-residue protein sequence, read N- to C-terminus: Putative pyruvate-flavodoxin oxidoreductase (1199 aa).

2 consecutive 4Fe-4S ferredoxin-type domains span residues 681–710 (EIPV…GKVY) and 737–766 (FTIQ…QPRL). Cysteine 690, cysteine 693, cysteine 696, cysteine 700, cysteine 746, cysteine 749, cysteine 752, cysteine 756, cysteine 820, cysteine 823, cysteine 848, and cysteine 1079 together coordinate [4Fe-4S] cluster.

Belongs to the pyruvate:ferredoxin/flavodoxin oxidoreductase family. It depends on [4Fe-4S] cluster as a cofactor.

The catalysed reaction is oxidized [flavodoxin] + pyruvate + CoA + 2 H(+) = reduced [flavodoxin] + acetyl-CoA + CO2. Oxidoreductase required for the transfer of electrons from pyruvate to flavodoxin. This is Putative pyruvate-flavodoxin oxidoreductase (nifJ) from Synechocystis sp. (strain ATCC 27184 / PCC 6803 / Kazusa).